A 634-amino-acid chain; its full sequence is Mitochondrial Rho GTPase 1 (634 aa).

The Cytoplasmic segment spans residues 1 to 604 (MLCCMRICVC…PRSEEDVEGK (604 aa)). The Miro 1 domain occupies 2–171 (LCCMRICVCG…FFLCQKAVTH (170 aa)). GTP-binding positions include 11-18 (GDEGTGKS), 60-64 (DTSAV), and 116-119 (NKSD). 2 EF-hand domains span residues 187–222 (AAVAALQRIFYLSDKDRDGYLSDKEIKDFQMRCFEK) and 307–342 (EGYRFFVNLFLLSDKDNDGGLNDAELASLFAPTPGL). Ca(2+) is bound by residues Asp200, Asp202, Asp204, Tyr206, Glu211, Asp320, Asp322, Asp324, and Glu331. The interval 399 to 419 (NPSTTAALKVTRPRKRRKRPG) is disordered. Residues 409–419 (TRPRKRRKRPG) show a composition bias toward basic residues. The 167-residue stretch at 423–589 (RNVVLGHIVG…FVHIAEAAME (167 aa)) folds into the Miro 2 domain. GTP-binding positions include 432–439 (GAPGSGKS), 468–472 (ELPGG), and 538–541 (LKAD). A helical; Anchor for type IV membrane protein membrane pass occupies residues 605–625 (WMSWGIALGAVVCAGAAAVMI). The Mitochondrial intermembrane portion of the chain corresponds to 626-634 (WRRVSGSGV).

It belongs to the mitochondrial Rho GTPase family.

The protein localises to the mitochondrion outer membrane. Functionally, mitochondrial GTPase involved in mitochondrial trafficking. Probably involved in control of anterograde transport of mitochondria and their subcellular distribution. This chain is Mitochondrial Rho GTPase 1 (gem1), found in Emericella nidulans (strain FGSC A4 / ATCC 38163 / CBS 112.46 / NRRL 194 / M139) (Aspergillus nidulans).